Reading from the N-terminus, the 358-residue chain is Phospho-N-acetylmuramoyl-pentapeptide-transferase (358 aa).

A run of 10 helical transmembrane segments spans residues 13–47 (LFILNTFALIVTSYLFNNFIFTGVYILFFFISIFI), 81–101 (MGGIFMIIPFLILLLIITINL), 106–126 (LILLLLTVFGFFITGFLDDYL), 148–168 (ISIIFILLAYEKNLISPLITI), 171–191 (SWAINMNIFILPVAFLVLVGI), 201–221 (LDGLAAGCSGIVFYGLGTEIL), 228–248 (LFVFSILCFSMSGICLGFLKY), 255–275 (IFMGDTGSLSIGAILGSIALL), 278–298 (SIFTLSIFSGIFIIESLSVII), and 336–356 (IVENFWKINILLVILGIVLKI).

Belongs to the glycosyltransferase 4 family. MraY subfamily. The cofactor is Mg(2+).

The protein resides in the cell inner membrane. It carries out the reaction UDP-N-acetyl-alpha-D-muramoyl-L-alanyl-gamma-D-glutamyl-meso-2,6-diaminopimeloyl-D-alanyl-D-alanine + di-trans,octa-cis-undecaprenyl phosphate = di-trans,octa-cis-undecaprenyl diphospho-N-acetyl-alpha-D-muramoyl-L-alanyl-D-glutamyl-meso-2,6-diaminopimeloyl-D-alanyl-D-alanine + UMP. It functions in the pathway cell wall biogenesis; peptidoglycan biosynthesis. In terms of biological role, catalyzes the initial step of the lipid cycle reactions in the biosynthesis of the cell wall peptidoglycan: transfers peptidoglycan precursor phospho-MurNAc-pentapeptide from UDP-MurNAc-pentapeptide onto the lipid carrier undecaprenyl phosphate, yielding undecaprenyl-pyrophosphoryl-MurNAc-pentapeptide, known as lipid I. This chain is Phospho-N-acetylmuramoyl-pentapeptide-transferase, found in Prochlorococcus marinus (strain MIT 9301).